The following is a 224-amino-acid chain: UPF0758 protein SPO0054 (224 aa).

Residues 102 to 224 enclose the MPN domain; the sequence is VISSWDALLD…ELSFRAEGYL (123 aa). The Zn(2+) site is built by His-173, His-175, and Asp-186. The short motif at 173–186 is the JAMM motif element; it reads HNHPSGDPTPSQSD.

The protein belongs to the UPF0758 family.

The protein is UPF0758 protein SPO0054 of Ruegeria pomeroyi (strain ATCC 700808 / DSM 15171 / DSS-3) (Silicibacter pomeroyi).